We begin with the raw amino-acid sequence, 341 residues long: HTH-type transcriptional repressor PurR (341 aa).

One can recognise an HTH lacI-type domain in the interval 2-56; that stretch reads ATIKDVAKRANVSTTTVSHVINKTRFVAEETRNAVWAAIKELHYSPSAVARSLKV. Positions 4–23 form a DNA-binding region, H-T-H motif; the sequence is IKDVAKRANVSTTTVSHVIN. Residues 48 to 56 mediate DNA binding; sequence SAVARSLKV. Hypoxanthine is bound by residues Tyr73, Arg190, Thr192, Phe221, and Asp275.

Homodimer.

It participates in purine metabolism; purine nucleotide biosynthesis [regulation]. Is the main repressor of the genes involved in the de novo synthesis of purine nucleotides, regulating purB, purC, purEK, purF, purHD, purL, purMN and guaBA expression. PurR is allosterically activated to bind its cognate DNA by binding the purine corepressors, hypoxanthine or guanine, thereby effecting transcription repression. This chain is HTH-type transcriptional repressor PurR, found in Salmonella arizonae (strain ATCC BAA-731 / CDC346-86 / RSK2980).